A 394-amino-acid polypeptide reads, in one-letter code: Endothelial cell-selective adhesion molecule (394 aa).

The N-terminal stretch at 1–29 (MILPARTPETSLLRVLFLGLSTLAAFSLA) is a signal peptide. Residues 30–251 (QMELHVPPGL…LDVMTGSKAA (222 aa)) lie on the Extracellular side of the membrane. One can recognise an Ig-like V-type domain in the interval 37–146 (PGLNKLEAVE…DGKNIGHSIK (110 aa)). N111, N172, N216, and N239 each carry an N-linked (GlcNAc...) asparagine glycan. Positions 156-243 (PAPPSCSFQG…GFAQCNVTLD (88 aa)) constitute an Ig-like C2-type domain. C177 and C227 are oxidised to a cystine. Residues 252 to 272 (VVAGAVVGTFVGLVLIAGLVL) form a helical membrane-spanning segment. The Cytoplasmic segment spans residues 273–394 (LYQRRSKTLE…PAQSQAGSLV (122 aa)). A disordered region spans residues 300–372 (WTKGSDTISK…SLTPGGVSSS (73 aa)). 2 stretches are compositionally biased toward polar residues: residues 303–318 (GSDTISKNGTLSSVTS) and 335–347 (FTPTPSVSSQALS). S304 carries the phosphoserine modification. T336 and T338 each carry phosphothreonine. A phosphoserine mark is found at S340, S343, and S348.

Interacts with MAGI1.

It localises to the cell junction. Its subcellular location is the adherens junction. It is found in the tight junction. The protein resides in the cell membrane. Can mediate aggregation most likely through a homophilic molecular interaction. The protein is Endothelial cell-selective adhesion molecule (Esam) of Rattus norvegicus (Rat).